A 155-amino-acid polypeptide reads, in one-letter code: UPF0178 protein Clos_2709 (155 aa).

Belongs to the UPF0178 family.

In Alkaliphilus oremlandii (strain OhILAs) (Clostridium oremlandii (strain OhILAs)), this protein is UPF0178 protein Clos_2709.